The following is a 201-amino-acid chain: Retinol-binding protein 4 (201 aa).

A signal peptide spans 1–18 (MEWVWALVLLAALGSAQA). Disulfide bonds link Cys-22-Cys-178, Cys-88-Cys-192, and Cys-138-Cys-147. Position 116 (Gln-116) interacts with substrate. Arg-139 bears the Omega-N-methylarginine mark.

This sequence belongs to the calycin superfamily. Lipocalin family. As to quaternary structure, interacts with TTR. Interaction with TTR prevents its loss by filtration through the kidney glomeruli. Interacts with STRA6.

Its subcellular location is the secreted. In terms of biological role, retinol-binding protein that mediates retinol transport in blood plasma. Delivers retinol from the liver stores to the peripheral tissues. Transfers the bound all-trans retinol to STRA6, that then facilitates retinol transport across the cell membrane. In Sus scrofa (Pig), this protein is Retinol-binding protein 4 (RBP4).